The chain runs to 85 residues: Translation initiation factor IF-1 1 (85 aa).

An S1-like domain is found at 1 to 72 (MSKEDLIEMQ…NKGRLTFRHI (72 aa)).

This sequence belongs to the IF-1 family. As to quaternary structure, component of the 30S ribosomal translation pre-initiation complex which assembles on the 30S ribosome in the order IF-2 and IF-3, IF-1 and N-formylmethionyl-tRNA(fMet); mRNA recruitment can occur at any time during PIC assembly.

It is found in the cytoplasm. Its function is as follows. One of the essential components for the initiation of protein synthesis. Stabilizes the binding of IF-2 and IF-3 on the 30S subunit to which N-formylmethionyl-tRNA(fMet) subsequently binds. Helps modulate mRNA selection, yielding the 30S pre-initiation complex (PIC). Upon addition of the 50S ribosomal subunit IF-1, IF-2 and IF-3 are released leaving the mature 70S translation initiation complex. This Paracidovorax citrulli (strain AAC00-1) (Acidovorax citrulli) protein is Translation initiation factor IF-1 1.